Reading from the N-terminus, the 530-residue chain is Autoinducer-2 kinase (530 aa).

Belongs to the FGGY kinase family.

It is found in the cytoplasm. It carries out the reaction (S)-4,5-dihydroxypentane-2,3-dione + ATP = (2S)-2-hydroxy-3,4-dioxopentyl phosphate + ADP + H(+). Functionally, catalyzes the phosphorylation of autoinducer-2 (AI-2) to phospho-AI-2, which subsequently inactivates the transcriptional regulator LsrR and leads to the transcription of the lsr operon. Phosphorylates the ring-open form of (S)-4,5-dihydroxypentane-2,3-dione (DPD), which is the precursor to all AI-2 signaling molecules, at the C5 position. The polypeptide is Autoinducer-2 kinase (Escherichia coli O9:H4 (strain HS)).